The sequence spans 484 residues: Protein arginine methyltransferase NDUFAF7 homolog, mitochondrial (484 aa).

The transit peptide at 1 to 12 (MFRSITQRVIRN) directs the protein to the mitochondrion.

The protein belongs to the NDUFAF7 family. As to quaternary structure, homodimer. Interacts with ndufs2.

Its subcellular location is the mitochondrion. It catalyses the reaction L-arginyl-[protein] + 2 S-adenosyl-L-methionine = N(omega),N(omega)'-dimethyl-L-arginyl-[protein] + 2 S-adenosyl-L-homocysteine + 2 H(+). Functionally, involved in the assembly or stability of mitochondrial NADH:ubiquinone oxidoreductase complex (complex I). Acts as an arginine methyltransferase and probably acts by mediating arginine methylation of ndufs2. The protein is Protein arginine methyltransferase NDUFAF7 homolog, mitochondrial of Dictyostelium discoideum (Social amoeba).